A 153-amino-acid chain; its full sequence is FAD synthase (153 aa).

Residues 9–10 (TF), 14–17 (HPGH), and Asp92 each bind ATP.

It belongs to the archaeal FAD synthase family. In terms of assembly, homodimer. A divalent metal cation is required as a cofactor.

The enzyme catalyses FMN + ATP + H(+) = FAD + diphosphate. Its pathway is cofactor biosynthesis; FAD biosynthesis; FAD from FMN: step 1/1. Functionally, catalyzes the transfer of the AMP portion of ATP to flavin mononucleotide (FMN) to produce flavin adenine dinucleotide (FAD) coenzyme. This chain is FAD synthase, found in Halorubrum lacusprofundi (strain ATCC 49239 / DSM 5036 / JCM 8891 / ACAM 34).